Here is a 289-residue protein sequence, read N- to C-terminus: uncharacterized protein (289 aa).

The N-terminal stretch at 1 to 19 is a signal peptide; that stretch reads MAKWLGAPLARGVSTATRA. The next 2 membrane-spanning stretches (helical) occupy residues 90–110 and 257–277; these read GLLA…GWGV and AALS…LVFA.

It is found in the cell membrane. This is an uncharacterized protein from Mycobacterium tuberculosis (strain CDC 1551 / Oshkosh).